A 450-amino-acid polypeptide reads, in one-letter code: Zinc metalloproteinase nas-13 (450 aa).

An N-terminal signal peptide occupies residues Met1 to Ala31. An N-linked (GlcNAc...) asparagine glycan is attached at Asn68. Residues Asn110–Pro303 form the Peptidase M12A domain. 2 disulfide bridges follow: Cys152-Cys302 and Cys174-Cys193. A Zn(2+)-binding site is contributed by His201. Residue Glu202 is part of the active site. 2 residues coordinate Zn(2+): His205 and His211. Asn225 carries an N-linked (GlcNAc...) asparagine glycan. Positions Arg349–Asp351 match the Cell attachment site motif. Cystine bridges form between Cys368/Cys404, Cys375/Cys397, Cys384/Cys401, Cys414/Cys450, Cys421/Cys443, and Cys430/Cys447. ShKT domains are found at residues Cys368–Cys404 and Cys414–Cys450. Asn431 carries an N-linked (GlcNAc...) asparagine glycan.

Zn(2+) is required as a cofactor.

It is found in the secreted. Functionally, metalloprotease. The chain is Zinc metalloproteinase nas-13 (nas-13) from Caenorhabditis elegans.